Reading from the N-terminus, the 483-residue chain is Linamarin synthase 1 (483 aa).

His-22 serves as the catalytic Proton acceptor. His-22 contributes to the an anthocyanidin binding site. The active-site Charge relay is the Asp-124. Residues Thr-146, Val-360, Gln-362, His-377, Trp-380, Asn-381, Ser-382, and Glu-385 each coordinate UDP-alpha-D-glucose. An anthocyanidin is bound at residue Ala-400. The UDP-alpha-D-glucose site is built by Glu-401 and Gln-402.

The protein belongs to the UDP-glycosyltransferase family. As to expression, expressed in the cortex, xylem and phloem parenchyma, and in specific cells in the endodermis of the petiole of the first unfolded leaf.

It catalyses the reaction 2-hydroxy-2-methylpropanenitrile + UDP-alpha-D-glucose = linamarin + UDP + H(+). In terms of biological role, UDP-glucosyltransferase catalyzing in planta synthesis of cyanogenic glucosides. Able to glucosylate acetone cyanohydrin and 2-hydroxy-2-methylbutyronitrile, forming linamarin and lotaustralin. Also accepts, to some extent, a wide range of potential acceptor substrates, including simple alcohols, flavonoids, isoflavonoids and other hydroxynitriles such as p-hydroxymandelonitrile, mandelonitrile, (E)-4-hydroxy-2-methylbut-2-enenitrile and (E)- 2-(hydroxymethyl)but-2-enenitrile. The chain is Linamarin synthase 1 from Manihot esculenta (Cassava).